The chain runs to 632 residues: Chaperone protein DnaK (632 aa).

Thr198 is modified (phosphothreonine; by autocatalysis).

Belongs to the heat shock protein 70 family.

Acts as a chaperone. This Rhodopseudomonas palustris (strain BisB18) protein is Chaperone protein DnaK.